The sequence spans 164 residues: uncharacterized protein (164 aa).

Positions 1–29 (MLCVRSSSSNLESDTYLSRYSTRASAGTG) are enriched in polar residues. The segment at 1–62 (MLCVRSSSSN…SKPSNNKNID (62 aa)) is disordered. A compositionally biased stretch (low complexity) spans 43–62 (SSDSSSSSSESKPSNNKNID).

This is an uncharacterized protein from Schizosaccharomyces pombe (strain 972 / ATCC 24843) (Fission yeast).